The sequence spans 446 residues: Na(+)-translocating NADH-quinone reductase subunit A (446 aa).

The protein belongs to the NqrA family. As to quaternary structure, composed of six subunits; NqrA, NqrB, NqrC, NqrD, NqrE and NqrF.

The catalysed reaction is a ubiquinone + n Na(+)(in) + NADH + H(+) = a ubiquinol + n Na(+)(out) + NAD(+). Functionally, NQR complex catalyzes the reduction of ubiquinone-1 to ubiquinol by two successive reactions, coupled with the transport of Na(+) ions from the cytoplasm to the periplasm. NqrA to NqrE are probably involved in the second step, the conversion of ubisemiquinone to ubiquinol. The sequence is that of Na(+)-translocating NADH-quinone reductase subunit A from Vibrio parahaemolyticus serotype O3:K6 (strain RIMD 2210633).